Consider the following 647-residue polypeptide: Dihydrolipoyllysine-residue acetyltransferase component of pyruvate dehydrogenase complex (647 aa).

The transit peptide at 1 to 86 (MWRVCARRAQ…LWGSPSRRWY (86 aa)) directs the protein to the mitochondrion. A Lipoyl-binding 1 domain is found at 91–167 (HQKVPLPSLS…PVGAIICITV (77 aa)). At Ser-100 the chain carries Phosphoserine. Lys-132 is subject to N6-lipoyllysine. The tract at residues 184–216 (SAAPAPPAAPAPTPAAPAPSPTPSAQAPGSSYP) is disordered. Residues 187–205 (PAPPAAPAPTPAAPAPSPT) are compositionally biased toward pro residues. The Lipoyl-binding 2 domain occupies 218–294 (HMQVLLPALS…PLGTPLCIIV (77 aa)). Lys-259 is modified (N6-lipoyllysine). Residues 311 to 352 (VTDLKPPAPPPIPSPAAPVPPAPQPVAPPPSAPRPAAPAGPK) form a disordered region. Pro residues predominate over residues 316 to 348 (PPAPPPIPSPAAPVPPAPQPVAPPPSAPRPAAP). Positions 356–393 (FVSPLAKKLAAEKGIDLTQVKGTGPDGRIIKKDIDSFV) constitute a Peripheral subunit-binding (PSBD) domain. Residue Arg-461 participates in CoA binding. The residue at position 466 (Lys-466) is an N6-acetyllysine. Lys-473 is subject to N6-succinyllysine. A CoA-binding site is contributed by Ser-475. Lys-547 carries the N6-succinyllysine modification. CoA-binding residues include Ser-566, Asn-567, and Gly-591. Residues His-620 and Asp-624 contribute to the active site.

This sequence belongs to the 2-oxoacid dehydrogenase family. In terms of assembly, part of the pyruvate dehydrogenase complex (PDHc) that is a multi-enzyme complex composed of multiple copies of three enzymes, pyruvate dehydrogenase (subunits PDH1A and PDHB, E1 component), dihydrolipoamide acetyltransferase (DLAT, E2 component), and dihydrolipoamide dehydrogenase (DLD, E3 component) to which is added an additional protein the E3-binding protein (PDHX, E3BP). In terms of structural architecture, the E2 and E3BP components assemble into a 60meric central core with icosahedral symmetry. The central core is decorated with E1 and E3 proteins. Currently, two alternative models for the E2:E3BP stoichiometry are considered as being either 48:12 (E2(48)-E3BP(12)) or 40:20 (E2(40)-E3BP(20)). Interacts with PDK2 and PDK3. Interacts with SIRT4. Interacts with PDHB. Requires (R)-lipoate as cofactor. Delipoylated at Lys-132 and Lys-259 by SIRT4, delipoylation decreases the PHD complex activity.

It is found in the mitochondrion matrix. The catalysed reaction is N(6)-[(R)-dihydrolipoyl]-L-lysyl-[protein] + acetyl-CoA = N(6)-[(R)-S(8)-acetyldihydrolipoyl]-L-lysyl-[protein] + CoA. As part of the pyruvate dehydrogenase complex, catalyzes the transfers of an acetyl group to a lipoic acid moiety. The pyruvate dehydrogenase complex, catalyzes the overall conversion of pyruvate to acetyl-CoA and CO(2), and thereby links cytoplasmic glycolysis and the mitochondrial tricarboxylic acid (TCA) cycle. In Bos taurus (Bovine), this protein is Dihydrolipoyllysine-residue acetyltransferase component of pyruvate dehydrogenase complex.